Here is an 84-residue protein sequence, read N- to C-terminus: Large ribosomal subunit protein bL27 (84 aa).

The tract at residues 1–22 (MAHKKAGGSTRNGRDSESKRLG) is disordered.

Belongs to the bacterial ribosomal protein bL27 family.

The polypeptide is Large ribosomal subunit protein bL27 (Shewanella amazonensis (strain ATCC BAA-1098 / SB2B)).